We begin with the raw amino-acid sequence, 193 residues long: Small ribosomal subunit protein eS7 (193 aa).

Belongs to the eukaryotic ribosomal protein eS7 family.

This Dictyostelium discoideum (Social amoeba) protein is Small ribosomal subunit protein eS7 (rps7).